The chain runs to 248 residues: tRNA (guanine-N(1)-)-methyltransferase (248 aa).

S-adenosyl-L-methionine-binding positions include Gly113 and 133–138 (IGDYVL). Positions 226–248 (ARPAQTIRAKGESQKTPKNKTDG) are disordered. Over residues 234–248 (AKGESQKTPKNKTDG) the composition is skewed to basic and acidic residues.

Belongs to the RNA methyltransferase TrmD family. As to quaternary structure, homodimer.

Its subcellular location is the cytoplasm. It catalyses the reaction guanosine(37) in tRNA + S-adenosyl-L-methionine = N(1)-methylguanosine(37) in tRNA + S-adenosyl-L-homocysteine + H(+). Specifically methylates guanosine-37 in various tRNAs. This chain is tRNA (guanine-N(1)-)-methyltransferase, found in Rhodopseudomonas palustris (strain ATCC BAA-98 / CGA009).